A 353-amino-acid chain; its full sequence is 2-Hydroxyacid oxidase 2 (353 aa).

Residues 2-353 (PLVCLADFKA…SPDLIQFSRL (352 aa)) enclose the FMN hydroxy acid dehydrogenase domain. Residues 77–79 (PTA), serine 106, and glutamine 128 contribute to the FMN site. Tyrosine 130 is a binding site for a 2-oxocarboxylate. Serine 133 is modified (phosphoserine). Threonine 156 serves as a coordination point for FMN. Residue arginine 165 coordinates a 2-oxocarboxylate. Lysine 224 contacts FMN. Residue histidine 248 is the Proton acceptor of the active site. Residue arginine 251 participates in a 2-oxocarboxylate binding. Residues 279–283 (DGGVR) and 302–303 (GR) each bind FMN. Residues 351-353 (SRL) carry the Microbody targeting signal motif.

This sequence belongs to the FMN-dependent alpha-hydroxy acid dehydrogenase family. As to quaternary structure, homotetramer. Could also form homooctamer. FMN serves as cofactor. In terms of tissue distribution, expressed in kidney.

The protein localises to the peroxisome. The catalysed reaction is a (2S)-2-hydroxycarboxylate + O2 = a 2-oxocarboxylate + H2O2. It catalyses the reaction 2-hydroxyoctanoate + O2 = 2-oxooctanoate + H2O2. The enzyme catalyses 2-hydroxyhexadecanoate + O2 = 2-oxohexadecanoate + H2O2. It carries out the reaction 2-hydroxyhexanoate + O2 = 2-oxohexanoate + H2O2. The catalysed reaction is mandelate + O2 = phenylglyoxylate + H2O2. Is inhibited in vitro by CCPST (4-carboxy-5-(4-chlorophenyl)sulfanyl-1,2,3-thiadiazole). Oxidase that catalyzes the oxidation of medium and long chain hydroxyacids such as 2-hydroxyhexadecanoate, 2-hydroxyoctanoate, 2-hydroxyhexanoate and 2-hydroxybutanoate, to the correspondong 2-oxoacids. Its role in the oxidation of 2-hydroxy fatty acids may contribute to the general pathway of fatty acid alpha-oxidation. Can also use mandelate as substrate. Active in vitro with the artificial electron acceptor 2,6-dichlorophenolindophenol (DCIP), but O2 is believed to be the physiological electron acceptor, leading to the production of H2O2. This chain is 2-Hydroxyacid oxidase 2 (Hao2), found in Rattus norvegicus (Rat).